Reading from the N-terminus, the 338-residue chain is Methionine import ATP-binding protein MetN 1 (338 aa).

The ABC transporter domain occupies 2–241 (IELHQVSKSF…AKHATTKRFV (240 aa)). 38–45 (GYSGAGKS) lines the ATP pocket.

The protein belongs to the ABC transporter superfamily. Methionine importer (TC 3.A.1.24) family. The complex is composed of two ATP-binding proteins (MetN), two transmembrane proteins (MetI) and a solute-binding protein (MetQ).

It localises to the cell membrane. The enzyme catalyses L-methionine(out) + ATP + H2O = L-methionine(in) + ADP + phosphate + H(+). It catalyses the reaction D-methionine(out) + ATP + H2O = D-methionine(in) + ADP + phosphate + H(+). Functionally, part of the ABC transporter complex MetNIQ involved in methionine import. Responsible for energy coupling to the transport system. In Listeria innocua serovar 6a (strain ATCC BAA-680 / CLIP 11262), this protein is Methionine import ATP-binding protein MetN 1.